Here is a 279-residue protein sequence, read N- to C-terminus: 1D-myo-inositol 2-acetamido-2-deoxy-alpha-D-glucopyranoside deacetylase (279 aa).

Positions 12, 15, and 146 each coordinate Zn(2+).

This sequence belongs to the MshB deacetylase family. Requires Zn(2+) as cofactor.

The enzyme catalyses 1D-myo-inositol 2-acetamido-2-deoxy-alpha-D-glucopyranoside + H2O = 1D-myo-inositol 2-amino-2-deoxy-alpha-D-glucopyranoside + acetate. Its function is as follows. Catalyzes the deacetylation of 1D-myo-inositol 2-acetamido-2-deoxy-alpha-D-glucopyranoside (GlcNAc-Ins) in the mycothiol biosynthesis pathway. The protein is 1D-myo-inositol 2-acetamido-2-deoxy-alpha-D-glucopyranoside deacetylase of Mycobacteroides abscessus (strain ATCC 19977 / DSM 44196 / CCUG 20993 / CIP 104536 / JCM 13569 / NCTC 13031 / TMC 1543 / L948) (Mycobacterium abscessus).